Here is a 97-residue protein sequence, read N- to C-terminus: Theromacin (97 aa).

The first 22 residues, Met1–Ala22, serve as a signal peptide directing secretion. Disulfide bonds link Cys24/Cys31, Cys46/Cys50, Cys53/Cys95, Cys61/Cys69, and Cys79/Cys81.

As to expression, coelomic liquid (at protein level). Expressed in large fat cells in contact with coelomic cavities, in intestinal epithelia and at the epidermis level.

It localises to the secreted. Its function is as follows. Has a bactericidal activity. Active against M.luteus. No activity toward E.coli and F.oxysporum. The polypeptide is Theromacin (Theromyzon tessulatum (Duck leech)).